The chain runs to 318 residues: MFLMNLLLLIIPILVAMAFLTLVERKMLGYMQLRKGPNIVGPYGLLQPFADAMKLFIKEPLKPLTSSISLFIIAPSLALTLAFTMWIPLPMPQPLINMNMGILFILATSSLAVYTILWSGWASNSKYALFGALRAVAQTISYEVTLAIILLSVLLLNGSFTLSSLITTQQFTWLLLPTWPLAMMWFISTLAETNRAPFDLTEGESELVSGFNVEYAAGPFALFFMAEYTNIIMMNALTTTIFMGALLNPLNPEMFTFSFTLKTLMLTATFLWIRASYPRFRYDQLMHLLWKNFLPLTLALCMWHISLPVIMACIPPLT.

8 helical membrane-spanning segments follow: residues 2 to 22 (FLMN…FLTL), 68 to 88 (ISLF…MWIP), 102 to 122 (ILFI…SGWA), 146 to 166 (LAII…SSLI), 171 to 191 (FTWL…STLA), 217 to 237 (AGPF…MNAL), 253 to 273 (EMFT…FLWI), and 294 to 314 (LPLT…MACI).

This sequence belongs to the complex I subunit 1 family.

The protein resides in the mitochondrion inner membrane. It carries out the reaction a ubiquinone + NADH + 5 H(+)(in) = a ubiquinol + NAD(+) + 4 H(+)(out). Functionally, core subunit of the mitochondrial membrane respiratory chain NADH dehydrogenase (Complex I) that is believed to belong to the minimal assembly required for catalysis. Complex I functions in the transfer of electrons from NADH to the respiratory chain. The immediate electron acceptor for the enzyme is believed to be ubiquinone. In Tamias sibiricus (Siberian chipmunk), this protein is NADH-ubiquinone oxidoreductase chain 1 (MT-ND1).